A 48-amino-acid polypeptide reads, in one-letter code: Large ribosomal subunit protein bL33 (48 aa).

The protein belongs to the bacterial ribosomal protein bL33 family.

In Streptococcus mutans serotype c (strain ATCC 700610 / UA159), this protein is Large ribosomal subunit protein bL33.